Reading from the N-terminus, the 887-residue chain is MINTSPLLNYVSSHHDIKAINQWRTDVEKQLQDSYENGQSIREIIKARSDLVDEALVFLWKHAELDQSKLGLFAVGGYGRREMLPYSDVDIMILSEDEISEENEKRISTFISSLWDVGNFKPGISVRTIQSCVEQAATDLTVATTLIEARLITGNTQLAKWPRRIVSQTWTDKTFYDAKMAEQAKRYHQHNNTESNLEPDIKNAPGGIRDINQIGWIAKRHFRVNRIYDLVHLGFISEFELAVLEEAESFLWEIRHHLHRLAKRDENRLLFDHQREIAAKFGYVRQEGQPVNYGVEQFMKRYYRTAQQVSTLNEMLLAYFSESVITPRLPNYERKIEVVNDHFKIVDNKLAVQHHKIFAEHPSAILELFYILANRPDIEGIRARTLRLLILAAKRINQSYRDNPEHQALFMSIIRSPYRLYDTLVAMKRYGVLGNYIPAFGQIMGLMQYDLFHIYTVDAHTLLLLRNLNRFREPEFAKEFPVVSSVFQRLARQDIVFIAALFHDIAKGRGGDHSELGAEDAIEFGRAHGFTERECKLIAWLIQNHLLMSLTAQKKDISDPDVVKDFAEKLGDMEHLDYLYTLTVADINATNPKLWNTWRASLMRQLYTHARDVIRTGLGRPVDYQMLIEDTKFAASELLVNNFALADVEKVWQELGDEYFIKESADEIAWHTQAILKHGDNPEPLVLLRAHRKAAQDAVQIFIYTRDQPNLFATTVAVLDRMNLDVQDAKIITASTAFSLDTYVVLDRFGTLLTDPEREETVKNALVKALSQPDQYPGLMQRRIPRQLRHFDIENTVDVTLNEALQQNMVEISTLDHPGLLARVGGLFMMQGLDIHSARIATLGERAEDIFFVTKKDGKPLNHEEVKLFSEKLKAALDEASNQICQH.

A uridylyltransferase region spans residues 1–337 (MINTSPLLNY…RLPNYERKIE (337 aa)). Residues 339-699 (VNDHFKIVDN…AHRKAAQDAV (361 aa)) are uridylyl-removing. In terms of domain architecture, HD spans 457-579 (VDAHTLLLLR…LGDMEHLDYL (123 aa)). 2 ACT domains span residues 700 to 782 (QIFI…LMQR) and 809 to 887 (MVEI…ICQH).

Belongs to the GlnD family. Requires Mg(2+) as cofactor.

It carries out the reaction [protein-PII]-L-tyrosine + UTP = [protein-PII]-uridylyl-L-tyrosine + diphosphate. It catalyses the reaction [protein-PII]-uridylyl-L-tyrosine + H2O = [protein-PII]-L-tyrosine + UMP + H(+). Uridylyltransferase (UTase) activity is inhibited by glutamine, while glutamine activates uridylyl-removing (UR) activity. Functionally, modifies, by uridylylation and deuridylylation, the PII regulatory proteins (GlnB and homologs), in response to the nitrogen status of the cell that GlnD senses through the glutamine level. Under low glutamine levels, catalyzes the conversion of the PII proteins and UTP to PII-UMP and PPi, while under higher glutamine levels, GlnD hydrolyzes PII-UMP to PII and UMP (deuridylylation). Thus, controls uridylylation state and activity of the PII proteins, and plays an important role in the regulation of nitrogen assimilation and metabolism. The polypeptide is Bifunctional uridylyltransferase/uridylyl-removing enzyme (Acinetobacter baumannii (strain ATCC 17978 / DSM 105126 / CIP 53.77 / LMG 1025 / NCDC KC755 / 5377)).